A 635-amino-acid polypeptide reads, in one-letter code: Threonine--tRNA ligase (635 aa).

The TGS domain maps to 1–61; it reads MINISFPDGS…DNDCKLRILT (61 aa). The interval 242-533 is catalytic; sequence DHRKLGRELD…LIEEYAGRFP (292 aa). Zn(2+)-binding residues include Cys333, His384, and His510.

Belongs to the class-II aminoacyl-tRNA synthetase family. In terms of assembly, homodimer. It depends on Zn(2+) as a cofactor.

It is found in the cytoplasm. It catalyses the reaction tRNA(Thr) + L-threonine + ATP = L-threonyl-tRNA(Thr) + AMP + diphosphate + H(+). Functionally, catalyzes the attachment of threonine to tRNA(Thr) in a two-step reaction: L-threonine is first activated by ATP to form Thr-AMP and then transferred to the acceptor end of tRNA(Thr). Also edits incorrectly charged L-seryl-tRNA(Thr). This Rickettsia conorii (strain ATCC VR-613 / Malish 7) protein is Threonine--tRNA ligase.